Here is a 124-residue protein sequence, read N- to C-terminus: Small ribosomal subunit protein uS12 (124 aa).

Residue D89 is modified to 3-methylthioaspartic acid.

It belongs to the universal ribosomal protein uS12 family. As to quaternary structure, part of the 30S ribosomal subunit. Contacts proteins S8 and S17. May interact with IF1 in the 30S initiation complex.

In terms of biological role, with S4 and S5 plays an important role in translational accuracy. Its function is as follows. Interacts with and stabilizes bases of the 16S rRNA that are involved in tRNA selection in the A site and with the mRNA backbone. Located at the interface of the 30S and 50S subunits, it traverses the body of the 30S subunit contacting proteins on the other side and probably holding the rRNA structure together. The combined cluster of proteins S8, S12 and S17 appears to hold together the shoulder and platform of the 30S subunit. The polypeptide is Small ribosomal subunit protein uS12 (Aliivibrio salmonicida (strain LFI1238) (Vibrio salmonicida (strain LFI1238))).